The primary structure comprises 189 residues: Autophagy receptor ATG45 (189 aa).

The interval 1–96 is binds glycogen; sequence MSNFLLVIPE…TNNILHFKDN (96 aa). The tract at residues 97 to 189 is required for sequestration into autophagosomes; that stretch reads EASQLMDIPL…AKKVKTYWNK (93 aa). Serine 107 carries the phosphoserine modification. The short motif at 127–130 is the ATG8 interaction motif (AIM) element; it reads YVNL. Serine 172 bears the Phosphoserine mark. Residues 176–187 form a may facilitate interactions with the autophagosome membrane region; the sequence is LMCIAKKVKTYW.

Interacts with ATG8.

Its subcellular location is the cytoplasm. The protein localises to the cytosol. The protein resides in the cytoplasmic vesicle. It is found in the autophagosome. Autophagy receptor for glycogen that facilitates the sequestration of glycogen assemblies into autophagosomes as part of bulk autophagy; the autophagy of glycogen (glycophagy) is stimulated during prolonged nitrogen starvation and during sporulation. The protein is Autophagy receptor ATG45 of Saccharomyces cerevisiae (strain ATCC 204508 / S288c) (Baker's yeast).